The chain runs to 317 residues: Thymidylate synthase (317 aa).

Residues Arg-40 and 167–168 (RR) contribute to the dUMP site. The Nucleophile role is filled by Cys-187. Residues 216–219 (RSCD), Asn-227, and 257–259 (HVY) each bind dUMP. Asp-219 provides a ligand contact to (6R)-5,10-methylene-5,6,7,8-tetrahydrofolate.

This sequence belongs to the thymidylate synthase family. As to quaternary structure, homodimer.

It carries out the reaction dUMP + (6R)-5,10-methylene-5,6,7,8-tetrahydrofolate = 7,8-dihydrofolate + dTMP. It functions in the pathway pyrimidine metabolism; dTTP biosynthesis. The polypeptide is Thymidylate synthase (TMP1) (Cryptococcus neoformans var. neoformans serotype D (strain B-3501A) (Filobasidiella neoformans)).